Consider the following 302-residue polypeptide: Acetylglutamate kinase (302 aa).

Substrate is bound by residues 68–69, R90, and N195; that span reads GG.

Belongs to the acetylglutamate kinase family. ArgB subfamily.

It localises to the cytoplasm. The enzyme catalyses N-acetyl-L-glutamate + ATP = N-acetyl-L-glutamyl 5-phosphate + ADP. It functions in the pathway amino-acid biosynthesis; L-arginine biosynthesis; N(2)-acetyl-L-ornithine from L-glutamate: step 2/4. In terms of biological role, catalyzes the ATP-dependent phosphorylation of N-acetyl-L-glutamate. This is Acetylglutamate kinase from Marinomonas sp. (strain MWYL1).